The following is a 1687-amino-acid chain: PH domain leucine-rich repeat-containing protein phosphatase 1 (1687 aa).

Met1 carries the N-acetylmethionine modification. Disordered regions lie at residues 1-96 (MEPA…GGGA) and 230-406 (AAAP…AAPD). Residues 78 to 96 (APQPAAGGAAPVPAAGGGA) are compositionally biased toward low complexity. The residue at position 286 (Ser286) is a Phosphoserine. Residues 314 to 326 (DTESFSLSPSAES) show a composition bias toward polar residues. At Ser372 the chain carries Phosphoserine. Residues 492–592 (RIQLSGMYNV…WLRQVSKVAS (101 aa)) form the PH domain. 21 LRR repeats span residues 594–615 (RISSVDLSCCSLEHLPANLFYS), 617–638 (DLTHLNLKQNFLRQTPTLPAAR), 648–669 (KLKSLNLSNNHLGAFPSAVCSI), 671–692 (TLAELNVSCNALREVPAAVGDM), 694–715 (NLQTFLLDGNFLQSLPAELESM), 717–739 (QLSYLGLSFNEFTDIPEVLEKLT), 740–760 (AVDKLCMAGNCVETLRLQALR), 764–785 (HIKHVDLRLNILRKLMADEVDF), 788–809 (HVTQLDLRDNKLGDLDAMIFNN), 829–850 (FLKALYASSNELAQLDVYPVPN), 851–872 (YLSYMDVSRNCLESVPEWVCES), 874–895 (KLEVLDIGHNQICELPARLFCN), 897–918 (SLRKLLAGHNRLARLPERLERT), 919–940 (SVEVLDVQHNQITELPPNLLMK), 943–964 (SLRFLNASANKLETLPPATLSE), 969–989 (ILQELYLTNNCLTDKCVPLLT), 993–1014 (RLKILHMAYNRLQSFPASKMAK), 1017–1038 (ELEEIDISGNKLKAIPTTIMNC), 1040–1061 (RMHTVIAHSNCIEVFPEVMQLP), 1062–1083 (EVKCVDLSCNELSEITLPENLP), and 1085–1106 (KLQELDLTGNPRLALDHKSLEL). The region spanning 1131–1378 (SHGYTEASGV…DSISAVVVQL (248 aa)) is the PPM-type phosphatase domain. Positions 1166, 1167, 1330, and 1369 each coordinate Mn(2+). 2 disordered regions span residues 1414 to 1465 (DRPS…SSPA) and 1604 to 1687 (PGGY…DTPL). The span at 1424-1445 (SSSSGMASEISSELSTSEMSSE) shows a compositional bias: low complexity. Positions 1649–1669 (LPPPPQPPQPQPQPQPQPQPQ) are enriched in pro residues. Positions 1685-1687 (TPL) match the PDZ-binding motif.

In terms of assembly, interacts with the nucleotide free form of K-Ras (KRAS) via its LRR repeats. Interacts with AKT2, AKT3 and PRKCB. Interacts with WDR48 and USP12. Mn(2+) serves as cofactor. As to expression, isoforms 1 and 2 are expressed in the retina.

The protein resides in the cytoplasm. The protein localises to the membrane. It is found in the nucleus. The catalysed reaction is O-phospho-L-seryl-[protein] + H2O = L-seryl-[protein] + phosphate. It catalyses the reaction O-phospho-L-threonyl-[protein] + H2O = L-threonyl-[protein] + phosphate. Insensitive to okadaic acid. Deubiquitination by WDR48-USP12 complex positively regulates PHLPP1 stability. Protein phosphatase involved in regulation of Akt and PKC signaling. Mediates dephosphorylation in the C-terminal domain hydrophobic motif of members of the AGC Ser/Thr protein kinase family; specifically acts on 'Ser-473' of AKT2 and AKT3, 'Ser-660' of PRKCB and 'Ser-657' of PRKCA. Isoform 2 seems to have a major role in regulating Akt signaling in hippocampal neurons. Akt regulates the balance between cell survival and apoptosis through a cascade that primarily alters the function of transcription factors that regulate pro- and antiapoptotic genes. Dephosphorylation of 'Ser-473' of Akt triggers apoptosis and suppression of tumor growth. Dephosphorylation of PRKCA and PRKCB leads to their destabilization and degradation. Dephosphorylates STK4 on 'Thr-387' leading to STK4 activation and apoptosis. Dephosphorylates RPS6KB1 and is involved in regulation of cap-dependent translation. Inhibits cancer cell proliferation and may act as a tumor suppressor. Dephosphorylates RAF1 inhibiting its kinase activity. May act as a negative regulator of K-Ras signaling in membrane rafts. Involved in the hippocampus-dependent long-term memory formation. Involved in circadian control by regulating the consolidation of circadian periodicity after resetting. Involved in development and function of regulatory T-cells. The chain is PH domain leucine-rich repeat-containing protein phosphatase 1 (Phlpp1) from Mus musculus (Mouse).